We begin with the raw amino-acid sequence, 341 residues long: Geranylfarnesyl diphosphate synthase (341 aa).

Residues Lys-47, Arg-50, and Gln-95 each contribute to the isopentenyl diphosphate site. Positions 102 and 106 each coordinate Mg(2+). Position 111 (Arg-111) interacts with an all-trans-polyprenyl diphosphate. Arg-112 contacts isopentenyl diphosphate. An all-trans-polyprenyl diphosphate contacts are provided by Lys-193, Thr-194, and Gln-231.

Belongs to the FPP/GGPP synthase family. Homodimer. The cofactor is Mg(2+).

It is found in the cytoplasm. It catalyses the reaction isopentenyl diphosphate + (2E,6E,10E)-geranylgeranyl diphosphate = (2E,6E,10E,14E)-geranylfarnesyl diphosphate + diphosphate. In terms of biological role, probably involved in biosynthesis of the precursor for C25 (sesterterpanyl chain) moiety of C20-C25 diether (2-O-sesterterpanyl-3-O-phytanyl-sn-glycer) membrane lipid. Catalyzes the condensation of isopentenyl pyrophosphate with the allylic pyrophosphates to yield geranylfarnesyl diphosphate (GFPP). Geranylgeranyl diphosphate (GGPP) is the preferred substrate, but dimethylallyl diphosphate (DMAPP) and farnesyl diphosphate (FPP) can also be used as allylic substrate. In Natronomonas pharaonis (strain ATCC 35678 / DSM 2160 / CIP 103997 / JCM 8858 / NBRC 14720 / NCIMB 2260 / Gabara) (Halobacterium pharaonis), this protein is Geranylfarnesyl diphosphate synthase (idsA3).